The sequence spans 202 residues: Outer-membrane lipoprotein carrier protein (202 aa).

The first 18 residues, 1–18, serve as a signal peptide directing secretion; it reads MNKLFLILLLIFSHEVFS.

The protein belongs to the LolA family. Monomer.

The protein localises to the periplasm. Its function is as follows. Participates in the translocation of lipoproteins from the inner membrane to the outer membrane. Only forms a complex with a lipoprotein if the residue after the N-terminal Cys is not an aspartate (The Asp acts as a targeting signal to indicate that the lipoprotein should stay in the inner membrane). The sequence is that of Outer-membrane lipoprotein carrier protein from Legionella pneumophila (strain Paris).